The sequence spans 291 residues: MAAPVVDAEYLRQVDRARRHLRALISSKGCAPIMLRLAWHDAGTYDVNTKTGGANGSIRYEEEYTHGSNAGLKIAIDLLEPIKAKSPKITYADLYQLAGVVAVEVTGGPTVEFIPGRRDSSVCPREGRLPDAKKGALHLRDIFYRMGLSDKDIVALSGGHTLGRAHPERSGFEGAWTQEPLKFDNSYFLELLKGESEGLLKLPTDKALLEDPSFRRYVDLYARDEDTFFKDYAESHKKLSELGFTPRSSGPASTKSDLSTGAVLAQSAVGVAVAAAVVIVSYLYEASKKSK.

Residue His40 is the Proton acceptor of the active site. Position 160 (His160) interacts with heme b. The K(+) site is built by Thr161, Thr177, and Asp184. The chain crosses the membrane as a helical span at residues 263–283 (VLAQSAVGVAVAAAVVIVSYL).

Belongs to the peroxidase family. Ascorbate peroxidase subfamily. The cofactor is heme b. Expressed in leaves, stems and flowers.

It is found in the peroxisome membrane. It carries out the reaction L-ascorbate + H2O2 = L-dehydroascorbate + 2 H2O. In terms of biological role, plays a key role in hydrogen peroxide removal. In Oryza sativa subsp. japonica (Rice), this protein is Probable L-ascorbate peroxidase 4, peroxisomal.